A 456-amino-acid chain; its full sequence is MSSQIKQVFARQILDSRGNPTVEVDVVLESGAFGRAAVPSGASTGIREALELRDGNKALFIGKSVYKAVENVNTKIAQAVKGLDALDQRLIDKTMIELDGSENKKNLGANAILGVSLATARAAASHLRKPFYRYLMDVKEYLMPVPMMNVINGGSHADNNVDMQEFMIVPAGFDTFSEALRCGTEVFHTLKKVLIADGYSVAGVGDEGGYAPDLPSNEAAIEAILKAVKEAGYEPGKHVFIALDPASSEFYKDGKYELKSENKSLTTEEMIDYYAAWVEKYPIVSIEDGLAEEDWAGWKLLTEKLGNKVQLVGDDLFVTNPSILAKGIEKGIANSILIKLNQIGTLTETFEAMAMAGQAGYTCVVSHRSGETSDTIIADLAVATCSGQIKTGSLSRSDRIAKYNQLLRIEEELGENAIYPGIKAFVFNSDEEVEEVVQEIIVEDSEAEKVVVQVEE.

(2R)-2-phosphoglycerate is bound at residue Q164. The Proton donor role is filled by E207. Residues D244, E287, and D314 each coordinate Mg(2+). 4 residues coordinate (2R)-2-phosphoglycerate: K339, R368, S369, and K390. The active-site Proton acceptor is K339.

It belongs to the enolase family. As to quaternary structure, component of the RNA degradosome, a multiprotein complex involved in RNA processing and mRNA degradation. Requires Mg(2+) as cofactor.

Its subcellular location is the cytoplasm. The protein resides in the secreted. The protein localises to the cell surface. It catalyses the reaction (2R)-2-phosphoglycerate = phosphoenolpyruvate + H2O. It functions in the pathway carbohydrate degradation; glycolysis; pyruvate from D-glyceraldehyde 3-phosphate: step 4/5. Functionally, catalyzes the reversible conversion of 2-phosphoglycerate (2-PG) into phosphoenolpyruvate (PEP). It is essential for the degradation of carbohydrates via glycolysis. The protein is Enolase of Francisella tularensis subsp. holarctica (strain LVS).